The chain runs to 362 residues: Chorismate synthase (362 aa).

NADP(+) is bound by residues R48 and R54. FMN contacts are provided by residues 131–133 (RSS), 243–244 (NA), G287, 302–306 (KPTSS), and R328.

The protein belongs to the chorismate synthase family. As to quaternary structure, homotetramer. FMNH2 serves as cofactor.

It catalyses the reaction 5-O-(1-carboxyvinyl)-3-phosphoshikimate = chorismate + phosphate. It participates in metabolic intermediate biosynthesis; chorismate biosynthesis; chorismate from D-erythrose 4-phosphate and phosphoenolpyruvate: step 7/7. In terms of biological role, catalyzes the anti-1,4-elimination of the C-3 phosphate and the C-6 proR hydrogen from 5-enolpyruvylshikimate-3-phosphate (EPSP) to yield chorismate, which is the branch point compound that serves as the starting substrate for the three terminal pathways of aromatic amino acid biosynthesis. This reaction introduces a second double bond into the aromatic ring system. The protein is Chorismate synthase of Rhodopseudomonas palustris (strain TIE-1).